Here is a 319-residue protein sequence, read N- to C-terminus: Ornithine carbamoyltransferase (319 aa).

Carbamoyl phosphate-binding positions include 63–66 (STRT), Gln90, Arg114, and 141–144 (HPCQ). L-ornithine contacts are provided by residues Asn172, Asp236, and 240-241 (SM). Carbamoyl phosphate contacts are provided by residues 276–277 (CL) and Arg304.

This sequence belongs to the aspartate/ornithine carbamoyltransferase superfamily. OTCase family.

Its subcellular location is the cytoplasm. It carries out the reaction carbamoyl phosphate + L-ornithine = L-citrulline + phosphate + H(+). It functions in the pathway amino-acid biosynthesis; L-arginine biosynthesis; L-arginine from L-ornithine and carbamoyl phosphate: step 1/3. Reversibly catalyzes the transfer of the carbamoyl group from carbamoyl phosphate (CP) to the N(epsilon) atom of ornithine (ORN) to produce L-citrulline. The chain is Ornithine carbamoyltransferase from Halalkalibacterium halodurans (strain ATCC BAA-125 / DSM 18197 / FERM 7344 / JCM 9153 / C-125) (Bacillus halodurans).